The primary structure comprises 478 residues: Aspartyl/glutamyl-tRNA(Asn/Gln) amidotransferase subunit B (478 aa).

Belongs to the GatB/GatE family. GatB subfamily. In terms of assembly, heterotrimer of A, B and C subunits.

The catalysed reaction is L-glutamyl-tRNA(Gln) + L-glutamine + ATP + H2O = L-glutaminyl-tRNA(Gln) + L-glutamate + ADP + phosphate + H(+). It carries out the reaction L-aspartyl-tRNA(Asn) + L-glutamine + ATP + H2O = L-asparaginyl-tRNA(Asn) + L-glutamate + ADP + phosphate + 2 H(+). Its function is as follows. Allows the formation of correctly charged Asn-tRNA(Asn) or Gln-tRNA(Gln) through the transamidation of misacylated Asp-tRNA(Asn) or Glu-tRNA(Gln) in organisms which lack either or both of asparaginyl-tRNA or glutaminyl-tRNA synthetases. The reaction takes place in the presence of glutamine and ATP through an activated phospho-Asp-tRNA(Asn) or phospho-Glu-tRNA(Gln). In Pseudothermotoga lettingae (strain ATCC BAA-301 / DSM 14385 / NBRC 107922 / TMO) (Thermotoga lettingae), this protein is Aspartyl/glutamyl-tRNA(Asn/Gln) amidotransferase subunit B.